The primary structure comprises 191 residues: Small ribosomal subunit protein uS7 (191 aa).

The segment at 56–80 (NKSGEQGDGDGESGGKAGGIKKRSL) is disordered.

This sequence belongs to the universal ribosomal protein uS7 family. In terms of assembly, part of the 30S ribosomal subunit. Contacts proteins S9 and S11.

Its function is as follows. One of the primary rRNA binding proteins, it binds directly to 16S rRNA where it nucleates assembly of the head domain of the 30S subunit. Is located at the subunit interface close to the decoding center, probably blocks exit of the E-site tRNA. This chain is Small ribosomal subunit protein uS7, found in Coxiella burnetii (strain CbuK_Q154) (Coxiella burnetii (strain Q154)).